Consider the following 357-residue polypeptide: Isoflavone 7-O-methyltransferase (357 aa).

Residues 200-203 (VGGG), D224, 224-225 (DR), 244-245 (DM), and K258 contribute to the S-adenosyl-L-methionine site. H262 (proton acceptor) is an active-site residue.

This sequence belongs to the class I-like SAM-binding methyltransferase superfamily. Cation-independent O-methyltransferase family. COMT subfamily.

It carries out the reaction a 7-hydroxyisoflavone + S-adenosyl-L-methionine = a 7-methoxyisoflavone + S-adenosyl-L-homocysteine + H(+). 7-O-methyltransferase involved in the biosynthesis of isoformononetin. Can use daidzein as substrate, but not medicarpin or 2,7,4'-trihydroxyisoflavanone. This Glycyrrhiza echinata (Licorice) protein is Isoflavone 7-O-methyltransferase (D7OMT).